A 500-amino-acid polypeptide reads, in one-letter code: ATP synthase subunit alpha (500 aa).

ATP is bound at residue 169–176 (GDRQTGKT).

It belongs to the ATPase alpha/beta chains family. In terms of assembly, F-type ATPases have 2 components, CF(1) - the catalytic core - and CF(0) - the membrane proton channel. CF(1) has five subunits: alpha(3), beta(3), gamma(1), delta(1), epsilon(1). CF(0) has three main subunits: a(1), b(2) and c(9-12). The alpha and beta chains form an alternating ring which encloses part of the gamma chain. CF(1) is attached to CF(0) by a central stalk formed by the gamma and epsilon chains, while a peripheral stalk is formed by the delta and b chains.

Its subcellular location is the cell membrane. The enzyme catalyses ATP + H2O + 4 H(+)(in) = ADP + phosphate + 5 H(+)(out). In terms of biological role, produces ATP from ADP in the presence of a proton gradient across the membrane. The alpha chain is a regulatory subunit. This is ATP synthase subunit alpha from Clostridioides difficile (strain 630) (Peptoclostridium difficile).